We begin with the raw amino-acid sequence, 318 residues long: Myoblast determination protein 1 (318 aa).

Met-1 participates in a covalent cross-link: Peptide (Met-Gly) (interchain with G-Cter in ubiquitin). Lys-104 carries the N6-methyllysine; by EHMT2 modification. In terms of domain architecture, bHLH spans 109-160 (DRRKAATMRERRRLSKVNEAFETLKRCTSSNPNQRLPKVEILRNAIRYIEGL). Disordered stretches follow at residues 175-224 (AAFY…RQNG) and 262-318 (SPAA…YQVL). A compositionally biased stretch (polar residues) spans 196–206 (SDASSPRSNCS). Residues 262-271 (SPAAPSLLLP) show a composition bias toward low complexity. Residues 272-282 (DAPPESPPGPP) show a composition bias toward pro residues. Over residues 290-304 (AEQGTQTPSPDSTPQ) the composition is skewed to polar residues.

As to quaternary structure, efficient DNA binding requires dimerization with another bHLH protein. Seems to form active heterodimers with ITF-2. Interacts with SUV39H1. Interacts with DDX5. Interacts with CHD2. Interacts with TSC22D3. Interacts with SETD3. Interacts with P-TEFB complex; promotes the transcriptional activity of MYOD1 through its CDK9-mediated phosphorylation. Interacts with CSRP3. Interacts with NUPR1. In terms of processing, phosphorylated by CDK9. This phosphorylation promotes its function in muscle differentiation. Acetylated by a complex containing EP300 and PCAF. The acetylation is essential to activate target genes. Conversely, its deacetylation by SIRT1 inhibits its function. Post-translationally, ubiquitinated on the N-terminus; which is required for proteasomal degradation. In terms of processing, methylation at Lys-104 by EHMT2/G9a inhibits myogenic activity.

It localises to the nucleus. Functionally, acts as a transcriptional activator that promotes transcription of muscle-specific target genes and plays a role in muscle differentiation. Together with MYF5 and MYOG, co-occupies muscle-specific gene promoter core region during myogenesis. Induces fibroblasts to differentiate into myoblasts. Interacts with and is inhibited by the twist protein. This interaction probably involves the basic domains of both proteins. This chain is Myoblast determination protein 1 (Myod1), found in Rattus norvegicus (Rat).